The primary structure comprises 169 residues: Protein Flattop homolog (169 aa).

Positions 53 to 169 are disordered; it reads IPRSSRSPWG…SPKLATPEPC (117 aa). Over residues 119-130 the composition is skewed to polar residues; the sequence is VQASPRNASPLQ.

It belongs to the Flattop family.

The protein localises to the cytoplasm. It is found in the cytoskeleton. It localises to the cilium basal body. Its subcellular location is the cell projection. The protein resides in the cilium. The protein localises to the apical cell membrane. Functionally, acts as a regulator of cilium basal body docking and positioning in mono- and multiciliated cells. In Nematostella vectensis (Starlet sea anemone), this protein is Protein Flattop homolog.